A 1955-amino-acid chain; its full sequence is Callose synthase 3 (1955 aa).

At methionine 1 to arginine 488 the chain is on the cytoplasmic side. Residues methionine 489–glutamine 509 traverse the membrane as a helical segment. Topologically, residues proline 510 to lysine 521 are extracellular. A helical membrane pass occupies residues valine 522–isoleucine 542. Residues leucine 543–arginine 558 lie on the Cytoplasmic side of the membrane. A helical membrane pass occupies residues tyrosine 559 to tyrosine 579. The Extracellular segment spans residues serine 580–leucine 604. A helical transmembrane segment spans residues phenylalanine 605–phenylalanine 625. Over proline 626–serine 660 the chain is Cytoplasmic. A helical transmembrane segment spans residues alanine 661–phenylalanine 681. Residues serine 682–asparagine 717 lie on the Extracellular side of the membrane. A helical membrane pass occupies residues isoleucine 718–isoleucine 738. Over tryptophan 739–tyrosine 1517 the chain is Cytoplasmic. The chain crosses the membrane as a helical span at residues phenylalanine 1518–leucine 1538. The Extracellular segment spans residues tyrosine 1539–glutamine 1566. Residues isoleucine 1567–methionine 1587 traverse the membrane as a helical segment. Topologically, residues glutamate 1588 to threonine 1597 are cytoplasmic. Residues alanine 1598 to leucine 1618 traverse the membrane as a helical segment. Topologically, residues glycine 1619–histidine 1661 are extracellular. Residues phenylalanine 1662–tyrosine 1682 form a helical membrane-spanning segment. Residues arginine 1683–tyrosine 1688 are Cytoplasmic-facing. A helical membrane pass occupies residues leucine 1689–phenylalanine 1709. Topologically, residues asparagine 1710 to arginine 1761 are extracellular. Residues glycine 1762–tyrosine 1782 form a helical membrane-spanning segment. Residues histidine 1783 to asparagine 1792 are Cytoplasmic-facing. Residues phenylalanine 1793–valine 1813 traverse the membrane as a helical segment. The Extracellular segment spans residues serine 1814 to glycine 1833. A helical transmembrane segment spans residues leucine 1834–isoleucine 1854. At glutamine 1855–aspartate 1856 the chain is on the cytoplasmic side. Residues isoleucine 1857–alanine 1877 form a helical membrane-spanning segment. The Extracellular portion of the chain corresponds to cysteine 1878 to glutamate 1899. The helical transmembrane segment at isoleucine 1900–serine 1920 threads the bilayer. Residues glutamate 1921–glutamate 1955 are Cytoplasmic-facing.

Belongs to the glycosyltransferase 48 family.

The protein resides in the cell membrane. It carries out the reaction [(1-&gt;3)-beta-D-glucosyl](n) + UDP-alpha-D-glucose = [(1-&gt;3)-beta-D-glucosyl](n+1) + UDP + H(+). Functionally, involved in callose synthesis at the forming cell plate during cytokinesis. During plant growth and development, callose is found as a transitory component of the cell plate in dividing cells, is a major component of pollen mother cell walls and pollen tubes, and is found as a structural component of plasmodesmatal canals. This is Callose synthase 3 (CALS3) from Arabidopsis thaliana (Mouse-ear cress).